Reading from the N-terminus, the 61-residue chain is Small ribosomal subunit protein uS14 (61 aa).

C24, C27, C40, and C43 together coordinate Zn(2+).

This sequence belongs to the universal ribosomal protein uS14 family. Zinc-binding uS14 subfamily. As to quaternary structure, part of the 30S ribosomal subunit. Contacts proteins S3 and S10. The cofactor is Zn(2+).

Its function is as follows. Binds 16S rRNA, required for the assembly of 30S particles and may also be responsible for determining the conformation of the 16S rRNA at the A site. The polypeptide is Small ribosomal subunit protein uS14 (Natranaerobius thermophilus (strain ATCC BAA-1301 / DSM 18059 / JW/NM-WN-LF)).